The following is a 563-amino-acid chain: GTPase Obg (563 aa).

The Obg domain occupies 2-168; it reads SDFVDRVTVH…RDVILELKSI (167 aa). One can recognise an OBG-type G domain in the interval 169–349; the sequence is ADVALVGFPS…LNFALSALVH (181 aa). GTP is bound by residues 175–182, 200–204, 221–224, 301–304, and 330–332; these read GFPSAGKS, FTTLV, DVPG, NKID, and STA. Ser-182 and Thr-202 together coordinate Mg(2+). The OCT domain occupies 383–469; it reads DEGGSALEFT…ARMVEFDWDP (87 aa). The disordered stretch occupies residues 529–563; it reads RKAGHWADPTVDDDRHDETSLFGHGESSEDGETEE.

This sequence belongs to the TRAFAC class OBG-HflX-like GTPase superfamily. OBG GTPase family. Monomer. Mg(2+) serves as cofactor.

It localises to the cytoplasm. An essential GTPase which binds GTP, GDP and possibly (p)ppGpp with moderate affinity, with high nucleotide exchange rates and a fairly low GTP hydrolysis rate. Plays a role in control of the cell cycle, stress response, ribosome biogenesis and in those bacteria that undergo differentiation, in morphogenesis control. This is GTPase Obg from Bifidobacterium longum (strain NCC 2705).